The chain runs to 376 residues: Coatomer subunit delta-4 (376 aa).

Residues 65 to 92 (LNTDTDTFTSRPKGRTSGGTTGAGKGIG) are disordered. The span at 80–92 (TSGGTTGAGKGIG) shows a compositional bias: gly residues. An MHD domain is found at 134 to 376 (SDPVTVAVEE…RLVADNYQVV (243 aa)).

Belongs to the adaptor complexes medium subunit family. Delta-COP subfamily. In terms of assembly, oligomeric complex that consists of at least the alpha, beta, beta', gamma, delta, epsilon and zeta subunits.

The protein resides in the cytoplasm. It is found in the golgi apparatus membrane. Its subcellular location is the cytoplasmic vesicle. The protein localises to the COPI-coated vesicle membrane. Functionally, the coatomer is a cytosolic protein complex that binds to dilysine motifs and reversibly associates with Golgi non-clathrin-coated vesicles, which further mediate biosynthetic protein transport from the ER, via the Golgi up to the trans Golgi network. Coatomer complex is required for budding from Golgi membranes, and is essential for the retrograde Golgi-to-ER transport of dilysine-tagged proteins. The protein is Coatomer subunit delta-4 of Oryza sativa subsp. japonica (Rice).